The primary structure comprises 261 residues: tRNA pseudouridine synthase A (261 aa).

The active-site Nucleophile is the aspartate 51. Tyrosine 109 is a binding site for substrate.

Belongs to the tRNA pseudouridine synthase TruA family. Homodimer.

The catalysed reaction is uridine(38/39/40) in tRNA = pseudouridine(38/39/40) in tRNA. Functionally, formation of pseudouridine at positions 38, 39 and 40 in the anticodon stem and loop of transfer RNAs. The chain is tRNA pseudouridine synthase A from Shewanella halifaxensis (strain HAW-EB4).